A 607-amino-acid polypeptide reads, in one-letter code: Elongation factor 4 (607 aa).

The tr-type G domain occupies 11–193 (SKIRNFSIIA…QIVEKVPAPT (183 aa)). GTP contacts are provided by residues 23-28 (DHGKST) and 140-143 (NKID).

It belongs to the TRAFAC class translation factor GTPase superfamily. Classic translation factor GTPase family. LepA subfamily.

Its subcellular location is the cell membrane. The catalysed reaction is GTP + H2O = GDP + phosphate + H(+). Functionally, required for accurate and efficient protein synthesis under certain stress conditions. May act as a fidelity factor of the translation reaction, by catalyzing a one-codon backward translocation of tRNAs on improperly translocated ribosomes. Back-translocation proceeds from a post-translocation (POST) complex to a pre-translocation (PRE) complex, thus giving elongation factor G a second chance to translocate the tRNAs correctly. Binds to ribosomes in a GTP-dependent manner. This Bacillus cereus (strain Q1) protein is Elongation factor 4.